A 53-amino-acid chain; its full sequence is Putative defensin-like protein 53 (53 aa).

4 disulfides stabilise this stretch: Cys12/Cys51, Cys16/Cys40, Cys26/Cys49, and Cys30/Cys50.

The protein belongs to the DEFL family.

The protein is Putative defensin-like protein 53 of Arabidopsis thaliana (Mouse-ear cress).